The primary structure comprises 491 residues: UDP-N-acetylmuramate--L-alanine ligase (491 aa).

G126–T132 serves as a coordination point for ATP.

The protein belongs to the MurCDEF family.

It localises to the cytoplasm. It carries out the reaction UDP-N-acetyl-alpha-D-muramate + L-alanine + ATP = UDP-N-acetyl-alpha-D-muramoyl-L-alanine + ADP + phosphate + H(+). It functions in the pathway cell wall biogenesis; peptidoglycan biosynthesis. Functionally, cell wall formation. This chain is UDP-N-acetylmuramate--L-alanine ligase, found in Escherichia coli O1:K1 / APEC.